A 316-amino-acid chain; its full sequence is NAC domain-containing protein 2 (316 aa).

Positions 17-170 (LPPGFRFHPT…DWVLCRLYNK (154 aa)) constitute an NAC domain. The DNA-binding element occupies 114–176 (LGIKKALVFY…LYNKKNEWEK (63 aa)). Positions 185-210 (EEASDMVTSQSHSHTHSWGETRTPES) are disordered. A compositionally biased stretch (polar residues) spans 190–200 (MVTSQSHSHTH).

Forms homodimer. Interacts with NAC071. In terms of tissue distribution, expressed in roots and stamens.

The protein resides in the nucleus. Functionally, transcription factor that possesses transactivation activity. Transcription activator involved in response to abiotic stresses. Plays a positive role during dehydration and salt stress. Binds specifically to the 5'-CATGTG-3' motif found in promoters of stress-responsive genes. The chain is NAC domain-containing protein 2 from Oryza sativa subsp. japonica (Rice).